We begin with the raw amino-acid sequence, 420 residues long: Exodeoxyribonuclease 7 large subunit (420 aa).

It belongs to the XseA family. As to quaternary structure, heterooligomer composed of large and small subunits.

It localises to the cytoplasm. It catalyses the reaction Exonucleolytic cleavage in either 5'- to 3'- or 3'- to 5'-direction to yield nucleoside 5'-phosphates.. In terms of biological role, bidirectionally degrades single-stranded DNA into large acid-insoluble oligonucleotides, which are then degraded further into small acid-soluble oligonucleotides. The protein is Exodeoxyribonuclease 7 large subunit of Helicobacter pylori (strain J99 / ATCC 700824) (Campylobacter pylori J99).